Here is a 190-residue protein sequence, read N- to C-terminus: Glycerol-3-phosphate acyltransferase 2 (190 aa).

A run of 5 helical transmembrane segments spans residues 1–21, 53–73, 76–96, 110–130, and 152–172; these read MNILTLILSYLIGSISFALIV, VIVAIADILKGTFACLLPLIL, TINPIVCGLLAILGHIFSVFA, VFLFLSPLGVLVGFVVFVLTL, and LIFEDKVIIALSLLIIVSIII.

This sequence belongs to the PlsY family. As to quaternary structure, probably interacts with PlsX.

It is found in the cell membrane. It carries out the reaction an acyl phosphate + sn-glycerol 3-phosphate = a 1-acyl-sn-glycero-3-phosphate + phosphate. The protein operates within lipid metabolism; phospholipid metabolism. In terms of biological role, catalyzes the transfer of an acyl group from acyl-phosphate (acyl-PO(4)) to glycerol-3-phosphate (G3P) to form lysophosphatidic acid (LPA). This enzyme utilizes acyl-phosphate as fatty acyl donor, but not acyl-CoA or acyl-ACP. This chain is Glycerol-3-phosphate acyltransferase 2, found in Bacillus anthracis.